A 968-amino-acid polypeptide reads, in one-letter code: Glycine dehydrogenase (decarboxylating) (968 aa).

Lys-713 is modified (N6-(pyridoxal phosphate)lysine).

The protein belongs to the GcvP family. In terms of assembly, the glycine cleavage system is composed of four proteins: P, T, L and H. The cofactor is pyridoxal 5'-phosphate.

The catalysed reaction is N(6)-[(R)-lipoyl]-L-lysyl-[glycine-cleavage complex H protein] + glycine + H(+) = N(6)-[(R)-S(8)-aminomethyldihydrolipoyl]-L-lysyl-[glycine-cleavage complex H protein] + CO2. In terms of biological role, the glycine cleavage system catalyzes the degradation of glycine. The P protein binds the alpha-amino group of glycine through its pyridoxal phosphate cofactor; CO(2) is released and the remaining methylamine moiety is then transferred to the lipoamide cofactor of the H protein. The polypeptide is Glycine dehydrogenase (decarboxylating) (Variovorax paradoxus (strain S110)).